The following is a 648-amino-acid chain: Sodium/nucleoside cotransporter 1 (648 aa).

The Cytoplasmic portion of the chain corresponds to 1-83; that stretch reads MADDTPRQRE…LCREHWQLFE (83 aa). The helical transmembrane segment at 84-104 threads the bilayer; the sequence is WISKGLLSTAYIGFLIVACLL. The Extracellular segment spans residues 105 to 108; that stretch reads DFPR. Residues 109-129 traverse the membrane as a helical segment; sequence ALALFVITCVVLVFLAYNLLK. Topologically, residues 130 to 147 are cytoplasmic; the sequence is RLLGSKLKKCVKFQGHSC. A helical membrane pass occupies residues 148–168; the sequence is LSLWLKRGLALAAGLGVILWL. At 169-175 the chain is on the extracellular side; sequence SLDTAQR. The helical transmembrane segment at 176 to 196 threads the bilayer; it reads PEQLVSFAGICVFLVLLFAGS. Residues 197 to 201 are Cytoplasmic-facing; the sequence is KHHRA. A helical transmembrane segment spans residues 202-222; the sequence is VSWRAVSWGLGLQFVLGLFVI. Over 223 to 265 the chain is Extracellular; the sequence is RTEPGFVAFQWLGDQIRVFLSYTEAGSSFVFGEALVKDVFAFQ. A helical transmembrane segment spans residues 266–286; sequence VLPIIVFFSCVMSVLYYLGLM. Topologically, residues 287-294 are cytoplasmic; the sequence is QWVILKIA. Residues 295–318 traverse the membrane as a helical segment; that stretch reads WLMQVTMGTSATETLSVAGNIFVS. Residues 319–339 lie on the Extracellular side of the membrane; that stretch reads QTEAPLLIRPYLADMTLSEVH. The helical transmembrane segment at 340–360 threads the bilayer; the sequence is VVMTGGYATIAGSLLGAYISF. G361 is a topological domain (cytoplasmic). Residues 362–380 form a helical membrane-spanning segment; that stretch reads IDASSLIAASVMAAPCALA. Topologically, residues 381-427 are extracellular; the sequence is LSKLVYPEVEESKFRSEEGVKLTYGDAQNLVEAASAGAAISVKVVAN. A helical membrane pass occupies residues 428–448; the sequence is IAANLIAFLAVLAFINAALSW. Topologically, residues 449-470 are cytoplasmic; sequence LGDMVDIQGLSFQLICSYVLRP. The chain crosses the membrane as a helical span at residues 471–491; sequence VAFLMGVAWEDCPVVAELLGI. At 492–531 the chain is on the extracellular side; sequence KLFLNEFVAYQELSQYKQRRLAGAEEWLGDKKQWISVRAE. A helical membrane pass occupies residues 532–552; it reads ILTTYALCGFANFSSIGIMLG. Topologically, residues 553–571 are cytoplasmic; the sequence is GLTSMVPQRRSDFSQIVLR. Residues 572 to 592 traverse the membrane as a helical segment; sequence ALITGAFVSLVNACVAGILYV. Residues 593–648 lie on the Extracellular side of the membrane; the sequence is PRGVEVDCMSLLNQTVSSSSFEVYLCCRQVFQNTSLEFGQEALHNCCRFYNHTVCT. N605, N625, and N643 each carry an N-linked (GlcNAc...) asparagine glycan.

This sequence belongs to the concentrative nucleoside transporter (CNT) (TC 2.A.41) family. In terms of processing, N-glycosylated. N-glycosylation is required for localization to the plasma membrane and the transporter activity.

Its subcellular location is the cell membrane. The protein resides in the apical cell membrane. It catalyses the reaction uridine(out) + Na(+)(out) = uridine(in) + Na(+)(in). The catalysed reaction is thymidine(out) + Na(+)(out) = thymidine(in) + Na(+)(in). It carries out the reaction cytidine(out) + Na(+)(out) = cytidine(in) + Na(+)(in). The enzyme catalyses adenosine(out) + Na(+)(out) = adenosine(in) + Na(+)(in). Its activity is regulated as follows. Due to its high apparent affinity but slow transport, adenosine could act as a negative regulator of pyrimidine transport under some conditions. In terms of biological role, sodium and pyrimidine nucleoside symporter of the plasma membrane that imports uridine, thymidine and cytidine into cells by coupling their transport to the transmembrane sodium electrochemical gradient. Also transports adenosine, an atypical substrate transported with high apparent affinity, but low maximum velocity. Therefore, exhibits the transport characteristics of the nucleoside transport system cit or N2 subtype (N2/cit). Involved in renal nucleoside (re)absorption. In Mus musculus (Mouse), this protein is Sodium/nucleoside cotransporter 1.